A 537-amino-acid polypeptide reads, in one-letter code: Hexahomomethionine N-hydroxylase (537 aa).

The chain crosses the membrane as a helical span at residues 7–27; the sequence is FNTCFQILLGFIVFIASITLL.

This sequence belongs to the cytochrome P450 family. It depends on heme as a cofactor. In terms of tissue distribution, highly expressed in hypocotyl and roots. Lower expression in siliques, stems and leaves. Barely detectable in flowers. Expressed only in the vascular bundles in apical plant parts.

It is found in the endoplasmic reticulum membrane. The catalysed reaction is L-hexahomomethionine + 2 reduced [NADPH--hemoprotein reductase] + 2 O2 = (E)-9-(methylsulfanyl)nonanal oxime + 2 oxidized [NADPH--hemoprotein reductase] + CO2 + 3 H2O + 2 H(+). The enzyme catalyses L-pentahomomethionine + 2 reduced [NADPH--hemoprotein reductase] + 2 O2 = (E)-8-(methylsulfanyl)octanal oxime + 2 oxidized [NADPH--hemoprotein reductase] + CO2 + 3 H2O + 2 H(+). It catalyses the reaction an L-polyhomomethionine + 2 reduced [NADPH--hemoprotein reductase] + 2 O2 = an (E)-omega-(methylsulfanyl)-alkanal oxime + 2 oxidized [NADPH--hemoprotein reductase] + CO2 + 3 H2O + 2 H(+). Functionally, catalyzes the conversion of the long chain elongated methionines penta- and hexahomomethionine to their corresponding aldoximes 8-methylthiooctanaldoxime and 9-methylthiononanaldoxime. This is Hexahomomethionine N-hydroxylase (CYP79F2) from Arabidopsis thaliana (Mouse-ear cress).